Consider the following 140-residue polypeptide: Gonadotropin subunit beta-2 (140 aa).

A signal peptide spans 1 to 23 (MGTPVKILVVLFSVIVLLAVAQS). 6 disulfides stabilise this stretch: cysteine 29–cysteine 77, cysteine 43–cysteine 92, cysteine 46–cysteine 130, cysteine 54–cysteine 108, cysteine 58–cysteine 110, and cysteine 113–cysteine 120. A glycan (N-linked (GlcNAc...) asparagine) is linked at asparagine 33.

The protein belongs to the glycoprotein hormones subunit beta family. In terms of assembly, heterodimer of an alpha and a beta chain.

It is found in the secreted. Functionally, involved in gametogenesis and steroidogenesis. In Carassius auratus (Goldfish), this protein is Gonadotropin subunit beta-2 (cgbb).